Here is a 315-residue protein sequence, read N- to C-terminus: Acetaldehyde dehydrogenase 2 (315 aa).

S11–I14 lines the NAD(+) pocket. C129 (acyl-thioester intermediate) is an active-site residue. Residues S160 to N168 and N290 contribute to the NAD(+) site.

It belongs to the acetaldehyde dehydrogenase family.

It carries out the reaction acetaldehyde + NAD(+) + CoA = acetyl-CoA + NADH + H(+). The chain is Acetaldehyde dehydrogenase 2 from Mycobacterium sp. (strain KMS).